The following is a 224-amino-acid chain: Probable GTP-binding protein EngB (224 aa).

The EngB-type G domain occupies 31 to 204; the sequence is VGVEIAFAGR…LGILDQWCKP (174 aa). GTP is bound by residues 39-46, 65-69, 83-86, 150-153, and 183-185; these read GRSNAGKS, GRTQL, DLPG, TKAD, and FSS. Mg(2+) is bound by residues serine 46 and threonine 67.

This sequence belongs to the TRAFAC class TrmE-Era-EngA-EngB-Septin-like GTPase superfamily. EngB GTPase family. Mg(2+) serves as cofactor.

Functionally, necessary for normal cell division and for the maintenance of normal septation. This chain is Probable GTP-binding protein EngB, found in Shewanella piezotolerans (strain WP3 / JCM 13877).